Here is a 340-residue protein sequence, read N- to C-terminus: Uroporphyrinogen decarboxylase (340 aa).

Residues 21–25, Asp71, Tyr147, Ser202, and His316 contribute to the substrate site; that span reads RQAGR.

This sequence belongs to the uroporphyrinogen decarboxylase family. Homodimer.

It localises to the cytoplasm. The enzyme catalyses uroporphyrinogen III + 4 H(+) = coproporphyrinogen III + 4 CO2. It functions in the pathway porphyrin-containing compound metabolism; protoporphyrin-IX biosynthesis; coproporphyrinogen-III from 5-aminolevulinate: step 4/4. In terms of biological role, catalyzes the decarboxylation of four acetate groups of uroporphyrinogen-III to yield coproporphyrinogen-III. The protein is Uroporphyrinogen decarboxylase of Nitratiruptor sp. (strain SB155-2).